Consider the following 89-residue polypeptide: Small ribosomal subunit protein uS19 (89 aa).

It belongs to the universal ribosomal protein uS19 family.

Protein S19 forms a complex with S13 that binds strongly to the 16S ribosomal RNA. The sequence is that of Small ribosomal subunit protein uS19 from Brachyspira hyodysenteriae (strain ATCC 49526 / WA1).